We begin with the raw amino-acid sequence, 221 residues long: uncharacterized protein (221 aa).

Residues 20 to 63 (DFDRAMLDFQAMFPSLSNSHIEYVLRKYDGDVSATINELLYDNT) enclose the CUE domain. The interval 131-194 (EEKKKKSCSD…GPYIGEGEVK (64 aa)) is disordered. The span at 156-166 (KNSKNSKISVN) shows a compositional bias: low complexity. Over residues 169–183 (KKLEPRRRSDEDRVP) the composition is skewed to basic and acidic residues.

This is an uncharacterized protein from Caenorhabditis elegans.